The sequence spans 130 residues: B1 protein (130 aa).

Positions 1-12 (LTSLILLVAVQA) are cleaved as a signal peptide. 2 cysteine pairs are disulfide-bonded: Cys-28–Cys-59 and Cys-99–Cys-116.

Belongs to the PBP/GOBP family. In terms of processing, N-glycosylated. As to expression, tubular accessory sex gland.

The protein localises to the secreted. Its function is as follows. May be a carrier protein for lipids. This chain is B1 protein, found in Tenebrio molitor (Yellow mealworm beetle).